Reading from the N-terminus, the 146-residue chain is Small ribosomal subunit protein uS9z (146 aa).

It belongs to the universal ribosomal protein uS9 family.

The protein is Small ribosomal subunit protein uS9z (RPS16A) of Arabidopsis thaliana (Mouse-ear cress).